Reading from the N-terminus, the 390-residue chain is Immunoglobulin mu Fc receptor (390 aa).

The signal sequence occupies residues 1–16; it reads MDFWLWPLYFLPVSGA. Over 17 to 251 the chain is Extracellular; sequence LRILPEVKVE…GSQSGREGQG (235 aa). The region spanning 23–123 is the Ig-like domain; the sequence is VKVEGELGGS…KTQKVTLNVH (101 aa). The segment at 33-115 is CDR4; sequence VTIKCPLPEM…AGMNTDRGKT (83 aa). Intrachain disulfides connect Cys-37–Cys-104 and Cys-49–Cys-58. Positions 40–45 are CDR1; sequence PEMHVR. The tract at residues 59–70 is CDR2; the sequence is GTVVSTTNFIKA. A Phosphothreonine modification is found at Thr-92. The segment at 106-115 is CDR3; the sequence is AGMNTDRGKT. Residues 166 to 204 form a disordered region; that stretch reads PAQRGKVPPVHHSSPTTQITHRPRVSRASSVAGDKPRTF. Residues 252–272 traverse the membrane as a helical segment; sequence FHILIPTILGLFLLALLGLVV. The Cytoplasmic portion of the chain corresponds to 273-390; sequence KRAVERRKAL…DSDDYINVPA (118 aa). Low complexity-rich tracts occupy residues 293–311 and 325–334; these read MRALESSQRPRGSPRPRSQ and ADAAGTGEAP. Residues 293-348 are disordered; that stretch reads MRALESSQRPRGSPRPRSQNNIYSACPRRARGADAAGTGEAPVPGPGAPLPPAPLQ. Pro residues predominate over residues 335-346; sequence VPGPGAPLPPAP.

Interacts (via Ig-like domain) with IGHM (via CH4/Cmu4 domain), both secreted and membrane-bound IgM; the interaction is glycan-independent and multivalent theoretically involving up to eight binding sites for the IgM pentamer. Phosphorylated on both Tyr and Ser residues. In terms of processing, O-glycosylated. Sialylated. O-linked glycans regulate trafficking to the plasma membrane. Expressed by CD19-positive B cells and CD4-positive and CD8-positive T cell populations in primary and secondary lymphoid tissues (at protein level). Among B cell subsets, detected in a subset of bone marrow pro- and pre-B cells, in most follicular and memory B cells and in a small subset of germinal center B cells (at protein level). Expressed at lower levels in CD56-positive NK cells (at protein level). Expressed in lymph nodes, lung, thymus and kidneys. Very weak expression detected in spleen, liver, heart, and salivary gland.

It localises to the cell membrane. The protein localises to the early endosome membrane. The protein resides in the golgi apparatus. Its subcellular location is the trans-Golgi network membrane. It is found in the lysosome membrane. It localises to the secreted. In terms of biological role, high-affinity Fc receptor for immunoglobulin M (IgM), both secreted and membrane-bound IgM. Primarily regulates IgM transport and homeostasis. In lymphoid cells, enables exocytosis of membrane-bound IgM on the plasma membrane as well as endocytosis of IgM-antigen complexes toward lysosomes for degradation. In mucosal epithelium, mediates retrotranscytosis of antigen-IgM complexes across mucosal M cells toward antigen-presenting cells in mucosal lymphoid tissues. Triggers costimulatory signaling and mediates most of IgM effector functions involved in B cell development and primary immune response to infection. Likely limits tonic IgM BCR signaling to self-antigens for proper negative selection of autoreactive B cells in the bone marrow and for the maintenance of regulatory B cell pool in peripheral lymphoid organs. Mediates antibody responses to T cell-dependent and T cell-independent antigens and promotes induction of an efficient neutralizing IgG response. Engages in cross-talk with antigen-receptor signaling via the non-canonical NF-kappa-B, MAP kinases and calcium signaling pathways. This is Immunoglobulin mu Fc receptor from Homo sapiens (Human).